Here is an 81-residue protein sequence, read N- to C-terminus: Small ribosomal subunit protein eS21 (81 aa).

It belongs to the eukaryotic ribosomal protein eS21 family. As to quaternary structure, component of the 40S small ribosomal subunit.

It is found in the cytoplasm. Its subcellular location is the cytosol. It localises to the rough endoplasmic reticulum. Component of the small ribosomal subunit. The ribosome is a large ribonucleoprotein complex responsible for the synthesis of proteins in the cell. The sequence is that of Small ribosomal subunit protein eS21 (rps21) from Danio rerio (Zebrafish).